We begin with the raw amino-acid sequence, 426 residues long: Selenocysteine lyase (426 aa).

Lys239 bears the N6-(pyridoxal phosphate)lysine mark. The S-selanylcysteine intermediate role is filled by Cys367.

It belongs to the class-V pyridoxal-phosphate-dependent aminotransferase family. As to quaternary structure, homodimer. The cofactor is pyridoxal 5'-phosphate.

It is found in the cytoplasm. Its subcellular location is the cytosol. The enzyme catalyses L-selenocysteine + AH2 = hydrogenselenide + L-alanine + A + H(+). Its function is as follows. Catalyzes the decomposition of L-selenocysteine to L-alanine and elemental selenium. The chain is Selenocysteine lyase (scly) from Xenopus laevis (African clawed frog).